A 458-amino-acid polypeptide reads, in one-letter code: UDP-N-acetylmuramoylalanine--D-glutamate ligase (458 aa).

124–130 (GSDGKTT) is an ATP binding site.

The protein belongs to the MurCDEF family.

It is found in the cytoplasm. The catalysed reaction is UDP-N-acetyl-alpha-D-muramoyl-L-alanine + D-glutamate + ATP = UDP-N-acetyl-alpha-D-muramoyl-L-alanyl-D-glutamate + ADP + phosphate + H(+). It functions in the pathway cell wall biogenesis; peptidoglycan biosynthesis. Its function is as follows. Cell wall formation. Catalyzes the addition of glutamate to the nucleotide precursor UDP-N-acetylmuramoyl-L-alanine (UMA). The chain is UDP-N-acetylmuramoylalanine--D-glutamate ligase from Clostridium perfringens (strain 13 / Type A).